Reading from the N-terminus, the 883-residue chain is Phosphoenolpyruvate carboxylase (883 aa).

Residues His141 and Lys547 contribute to the active site.

The protein belongs to the PEPCase type 1 family. Mg(2+) serves as cofactor.

It catalyses the reaction oxaloacetate + phosphate = phosphoenolpyruvate + hydrogencarbonate. Forms oxaloacetate, a four-carbon dicarboxylic acid source for the tricarboxylic acid cycle. The polypeptide is Phosphoenolpyruvate carboxylase (Chromohalobacter salexigens (strain ATCC BAA-138 / DSM 3043 / CIP 106854 / NCIMB 13768 / 1H11)).